Here is a 408-residue protein sequence, read N- to C-terminus: Sprouty-related, EVH1 domain-containing protein 3 (408 aa).

The region spanning 1–113 is the WH1 domain; sequence MVRVRAVVMA…KSLLAALAAL (113 aa). The tract at residues 118 to 226 is disordered; sequence LTPSSSSSSS…YEDYRRSGPP (109 aa). Low complexity predominate over residues 120–130; that stretch reads PSSSSSSSSPS. The region spanning 192-242 is the KBD domain; it reads LPFTGIPEPSESLAGAGSQGWGSRGYEDYRRSGPPPPPLALSTCVVRFAKT. Arg-238 carries the asymmetric dimethylarginine modification. Arg-246 is subject to Omega-N-methylarginine. Residues 256-286 form a disordered region; the sequence is LPAPLTEAAPPAPPARPPPGPGPTPAPAKAS. Residues 265 to 281 show a composition bias toward pro residues; the sequence is PPAPPARPPPGPGPTPA. Residues 294-405 form the SPR domain; the sequence is RCVHCRALFR…CAGCGGRHEE (112 aa).

In terms of assembly, interacts with palmitoyltransferase ZDHHC17/HIP14; the interaction leads to palmitoylation of SPRED3. In terms of processing, phosphorylated on tyrosine. Palmitoylated by ZDHHC17/HIP14. Post-translationally, ubiquitinated. As to expression, brain specific.

The protein localises to the cell membrane. In terms of biological role, tyrosine kinase substrate that inhibits growth-factor-mediated activation of MAP kinase. Inhibits fibroblast growth factor (FGF)-induced retinal lens fiber differentiation, probably by inhibiting FGF-mediated phosphorylation of ERK1/2. Inhibits TGFB-induced epithelial-to-mesenchymal transition in lens epithelial cells. This is Sprouty-related, EVH1 domain-containing protein 3 (Spred3) from Mus musculus (Mouse).